A 351-amino-acid chain; its full sequence is Autoinducer 2 import system permease protein LsrC (351 aa).

9 helical membrane passes run 14 to 34, 39 to 59, 70 to 90, 93 to 113, 115 to 135, 155 to 175, 213 to 233, 252 to 272, and 284 to 304; these read LLAI…YFSL, MIFS…LVML, ITGL…GLAA, LFAL…VTWL, IPAI…MLLL, ILFS…AMAW, MNGV…GFIP, GISL…AFLL, and LPAW…LVFD.

Belongs to the binding-protein-dependent transport system permease family. AraH/RbsC subfamily. In terms of assembly, the complex is composed of two ATP-binding proteins (LsrA), two transmembrane proteins (LsrC and LsrD) and a solute-binding protein (LsrB).

The protein localises to the cell inner membrane. In terms of biological role, part of the ABC transporter complex LsrABCD involved in autoinducer 2 (AI-2) import. Probably responsible for the translocation of the substrate across the membrane. The polypeptide is Autoinducer 2 import system permease protein LsrC (lsrC) (Yersinia pseudotuberculosis serotype O:1b (strain IP 31758)).